Consider the following 185-residue polypeptide: UPF0301 protein HDEF_0602 (185 aa).

Belongs to the UPF0301 (AlgH) family.

In Hamiltonella defensa subsp. Acyrthosiphon pisum (strain 5AT), this protein is UPF0301 protein HDEF_0602.